The sequence spans 400 residues: MSSKLVLVLNCGSSSLKFAIIDATNGEEHISGLAECFHLPEARIKWKVDGGKQEAALGAGAAHSEALNFIVNTILAQKPALSAQLTAIGHRIVHGGEKFTSSVIVTDDVIQGIKDSIPFAPLHNPAHLIGIAEALKSFPNLADKNVAVFDTAFHQTMPEESYLYALPYSLYKDHGIRRYGAHGTSHFYVSQEAAKILNKPLEELNVITCHLGNGGSVTAVRNGKCVDTSMGLTPLEGLVMGTRSGDLDPAIIFHLHDAMGMSVDQINTLLTKESGLLGLTEVTSDCRYVEDNYATKADAKRAMDVFCHRLAKYIGSYTALMDGRLDAVVFTGGIGENAAMVRELTLDKLGLLGFEIDHERNMAARFGKSGTITKDSSRLALVIPTNEELVIAQDAARLTA.

Asparagine 10 is a binding site for Mg(2+). Lysine 17 contacts ATP. Arginine 91 provides a ligand contact to substrate. Catalysis depends on aspartate 150, which acts as the Proton donor/acceptor. Residues histidine 210 to glycine 214, aspartate 285 to arginine 287, and glycine 333 to asparagine 337 contribute to the ATP site. Glutamate 387 is a Mg(2+) binding site.

This sequence belongs to the acetokinase family. As to quaternary structure, homodimer. Requires Mg(2+) as cofactor. Mn(2+) serves as cofactor.

It localises to the cytoplasm. It catalyses the reaction acetate + ATP = acetyl phosphate + ADP. It functions in the pathway metabolic intermediate biosynthesis; acetyl-CoA biosynthesis; acetyl-CoA from acetate: step 1/2. In terms of biological role, catalyzes the formation of acetyl phosphate from acetate and ATP. Can also catalyze the reverse reaction. The sequence is that of Acetate kinase from Yersinia pseudotuberculosis serotype I (strain IP32953).